The primary structure comprises 430 residues: Retinoic acid receptor RXR-alpha-A (430 aa).

Positions 1-20 (MHPSLLSPTSLGPSGSLHSP) are enriched in low complexity. 2 disordered regions span residues 1 to 25 (MHPS…STLS) and 48 to 73 (ASPG…SSSE). The segment at 1–99 (MHPSLLSPTS…QPSGTPLSLT (99 aa)) is modulating. Positions 58–72 (ISPQLNSHMNSVSSS) are enriched in polar residues. The segment at residues 100-175 (KHICAICGDR…MGMKREAVQE (76 aa)) is a DNA-binding region (nuclear receptor). Zn(2+)-binding residues include cysteine 103, cysteine 106, cysteine 120, and cysteine 123. An NR C4-type zinc finger spans residues 103 to 123 (CAICGDRSSGKHYGVYSCEGC). The tract at residues 128-133 (KRTVRK) is nuclear localization signal. 4 residues coordinate Zn(2+): cysteine 139, cysteine 145, cysteine 155, and cysteine 158. Residues 139-158 (CRDNKDCVIDKRQRNRCQYC) form an NR C4-type zinc finger. A compositionally biased stretch (basic and acidic residues) spans 174 to 186 (QEERQRAKERSEN). The segment at 174–196 (QEERQRAKERSENEVESTSSANE) is disordered. Positions 176 to 192 (ERQRAKERSENEVESTS) are hinge. One can recognise an NR LBD domain in the interval 195–426 (NEDMPVEKIL…TFLMEMLEAP (232 aa)). Residues arginine 284 and alanine 295 each coordinate 9-cis-retinoate. 2 residues coordinate all-trans-retinoate: arginine 284 and alanine 295. A required for nuclear export region spans residues 316-336 (RVLTELVSKMRDMQMDKTELG). An AF-2 region spans residues 415–426 (IDTFLMEMLEAP).

It belongs to the nuclear hormone receptor family. NR2 subfamily. As to quaternary structure, homodimer. Heterodimer; with a rar molecule. Binds DNA preferentially as a rar/rxr heterodimer.

It is found in the nucleus. Its function is as follows. Receptor for retinoic acid that acts as a transcription factor. Forms homo- or heterodimers with retinoic acid receptors (rars) and binds to target response elements in response to their ligands, all-trans or 9-cis retinoic acid, to regulate gene expression in various biological processes. The rar/rxr heterodimers bind to the retinoic acid response elements (RARE) composed of tandem 5'-AGGTCA-3' sites known as DR1-DR5 to regulate transcription. The high affinity ligand for rxrs is 9-cis retinoic acid. In the absence of ligand, the rar/rxr heterodimers associate with a multiprotein complex containing transcription corepressors that induce histone deacetylation, chromatin condensation and transcriptional suppression. On ligand binding, the corepressors dissociate from the receptors and coactivators are recruited leading to transcriptional activation. The polypeptide is Retinoic acid receptor RXR-alpha-A (Danio rerio (Zebrafish)).